The following is a 739-amino-acid chain: Phosphoribosylformylglycinamidine synthase subunit PurL (739 aa).

The active site involves H54. Residues Y57 and K96 each contribute to the ATP site. E98 is a binding site for Mg(2+). Residues S99 to H102 and R121 contribute to the substrate site. H100 serves as the catalytic Proton acceptor. D122 contributes to the Mg(2+) binding site. Q245 is a substrate binding site. D275 serves as a coordination point for Mg(2+). Substrate is bound at residue E319 to Q321. 2 residues coordinate ATP: D504 and G541. Position 542 (N542) interacts with Mg(2+). S544 is a substrate binding site.

This sequence belongs to the FGAMS family. As to quaternary structure, monomer. Part of the FGAM synthase complex composed of 1 PurL, 1 PurQ and 2 PurS subunits.

It localises to the cytoplasm. The enzyme catalyses N(2)-formyl-N(1)-(5-phospho-beta-D-ribosyl)glycinamide + L-glutamine + ATP + H2O = 2-formamido-N(1)-(5-O-phospho-beta-D-ribosyl)acetamidine + L-glutamate + ADP + phosphate + H(+). Its pathway is purine metabolism; IMP biosynthesis via de novo pathway; 5-amino-1-(5-phospho-D-ribosyl)imidazole from N(2)-formyl-N(1)-(5-phospho-D-ribosyl)glycinamide: step 1/2. Its function is as follows. Part of the phosphoribosylformylglycinamidine synthase complex involved in the purines biosynthetic pathway. Catalyzes the ATP-dependent conversion of formylglycinamide ribonucleotide (FGAR) and glutamine to yield formylglycinamidine ribonucleotide (FGAM) and glutamate. The FGAM synthase complex is composed of three subunits. PurQ produces an ammonia molecule by converting glutamine to glutamate. PurL transfers the ammonia molecule to FGAR to form FGAM in an ATP-dependent manner. PurS interacts with PurQ and PurL and is thought to assist in the transfer of the ammonia molecule from PurQ to PurL. This Lactococcus lactis subsp. cremoris (Streptococcus cremoris) protein is Phosphoribosylformylglycinamidine synthase subunit PurL.